The following is a 506-amino-acid chain: Histidine--tRNA ligase, mitochondrial (506 aa).

Residues 1–33 (MPQLGLLPGRAWTVLLGLLRPPPGALCIRAVRS) constitute a mitochondrion transit peptide. Position 67 is a phosphoserine (Ser-67). L-histidine-binding positions include 131 to 133 (DLT), Arg-158, Gln-174, Asp-178, Arg-327, and 331 to 332 (YY). Position 444 is an N6-acetyllysine (Lys-444).

It belongs to the class-II aminoacyl-tRNA synthetase family. Homodimer.

It localises to the mitochondrion. It catalyses the reaction tRNA(His) + L-histidine + ATP = L-histidyl-tRNA(His) + AMP + diphosphate + H(+). Functionally, mitochondrial aminoacyl-tRNA synthetase that catalyzes the ATP-dependent ligation of histidine to the 3'-end of its cognate tRNA, via the formation of an aminoacyl-adenylate intermediate (His-AMP). This chain is Histidine--tRNA ligase, mitochondrial (HARS2), found in Bos taurus (Bovine).